A 207-amino-acid chain; its full sequence is Outer-membrane lipoprotein carrier protein (207 aa).

A signal peptide spans 1–21; sequence MRLFRVLLLSAVAFALSPAQA.

This sequence belongs to the LolA family. As to quaternary structure, monomer.

The protein resides in the periplasm. Its function is as follows. Participates in the translocation of lipoproteins from the inner membrane to the outer membrane. Only forms a complex with a lipoprotein if the residue after the N-terminal Cys is not an aspartate (The Asp acts as a targeting signal to indicate that the lipoprotein should stay in the inner membrane). The protein is Outer-membrane lipoprotein carrier protein of Azotobacter vinelandii (strain DJ / ATCC BAA-1303).